Consider the following 153-residue polypeptide: MVVDLPRYLPLLLLLELWEPMYLLCSQPKGLSRAHWFEIQHIQTSRQPCNTAMRGVNNYTQHCKQINTFLHESFQNVAATCSLHNITCKNGRKNCHESAEPVKMTDCSHTGGAYPNCRYSSDKQYKFFIVACEHPKKEDPPYQLVPVHLDKIV.

Residues 1–27 (MVVDLPRYLPLLLLLELWEPMYLLCSQ) form the signal peptide. Residue His-41 is the Proton acceptor of the active site. Intrachain disulfides connect Cys-49–Cys-107, Cys-63–Cys-117, Cys-81–Cys-132, and Cys-88–Cys-95. N-linked (GlcNAc...) asparagine glycosylation occurs at Asn-58. 64–68 (KQINT) contacts substrate. Asn-85 carries N-linked (GlcNAc...) asparagine glycosylation. Lys-89 provides a ligand contact to substrate. The active-site Proton donor is the His-148.

This sequence belongs to the pancreatic ribonuclease family. In terms of assembly, interacts (via N-terminus) with bacterial lipopolysaccharide (LPS). In terms of tissue distribution, highly expressed in spleen (at protein level). Has little or no expression in healthy kidneys (at protein level). Detected at high levels in infected kidneys (at protein level). Expressed at low levels in bladder. Also detected in skeletal muscle, heart and bone marrow.

Its subcellular location is the secreted. It localises to the lysosome. The protein localises to the cytoplasmic granule. Functionally, ribonuclease which shows a preference for the pyrimidines uridine and cytosine. Has potent antibacterial activity against a range of Gram-positive and Gram-negative bacteria, including P.aeruginosa, A.baumanii, M.luteus, S.aureus, E.faecalis, E.faecium, S.saprophyticus and E.coli. Causes loss of bacterial membrane integrity, and also promotes agglutination of Gram-negative bacteria. Probably contributes to urinary tract sterility. Bactericidal activity is independent of RNase activity. This is Ribonuclease K6 (Rnase6) from Mus musculus (Mouse).